Reading from the N-terminus, the 353-residue chain is Nicotinate-nucleotide--dimethylbenzimidazole phosphoribosyltransferase (353 aa).

The active-site Proton acceptor is glutamate 319.

It belongs to the CobT family.

It carries out the reaction 5,6-dimethylbenzimidazole + nicotinate beta-D-ribonucleotide = alpha-ribazole 5'-phosphate + nicotinate + H(+). The protein operates within nucleoside biosynthesis; alpha-ribazole biosynthesis; alpha-ribazole from 5,6-dimethylbenzimidazole: step 1/2. Catalyzes the synthesis of alpha-ribazole-5'-phosphate from nicotinate mononucleotide (NAMN) and 5,6-dimethylbenzimidazole (DMB). The protein is Nicotinate-nucleotide--dimethylbenzimidazole phosphoribosyltransferase of Syntrophobacter fumaroxidans (strain DSM 10017 / MPOB).